Reading from the N-terminus, the 91-residue chain is Cell division topological specificity factor (91 aa).

This sequence belongs to the MinE family.

Functionally, prevents the cell division inhibition by proteins MinC and MinD at internal division sites while permitting inhibition at polar sites. This ensures cell division at the proper site by restricting the formation of a division septum at the midpoint of the long axis of the cell. In Bradyrhizobium sp. (strain BTAi1 / ATCC BAA-1182), this protein is Cell division topological specificity factor.